A 360-amino-acid polypeptide reads, in one-letter code: Phosphoserine aminotransferase (360 aa).

Arg-42 is a binding site for L-glutamate. 4 residues coordinate pyridoxal 5'-phosphate: Trp-102, Thr-152, Asp-171, and Gln-194. An N6-(pyridoxal phosphate)lysine modification is found at Lys-195. Residue 237–238 (NT) participates in pyridoxal 5'-phosphate binding.

It belongs to the class-V pyridoxal-phosphate-dependent aminotransferase family. SerC subfamily. As to quaternary structure, homodimer. Pyridoxal 5'-phosphate serves as cofactor.

It localises to the cytoplasm. The catalysed reaction is O-phospho-L-serine + 2-oxoglutarate = 3-phosphooxypyruvate + L-glutamate. It carries out the reaction 4-(phosphooxy)-L-threonine + 2-oxoglutarate = (R)-3-hydroxy-2-oxo-4-phosphooxybutanoate + L-glutamate. Its pathway is amino-acid biosynthesis; L-serine biosynthesis; L-serine from 3-phospho-D-glycerate: step 2/3. It functions in the pathway cofactor biosynthesis; pyridoxine 5'-phosphate biosynthesis; pyridoxine 5'-phosphate from D-erythrose 4-phosphate: step 3/5. In terms of biological role, catalyzes the reversible conversion of 3-phosphohydroxypyruvate to phosphoserine and of 3-hydroxy-2-oxo-4-phosphonooxybutanoate to phosphohydroxythreonine. This is Phosphoserine aminotransferase from Coxiella burnetii (strain RSA 331 / Henzerling II).